The chain runs to 145 residues: uncharacterized protein (145 aa).

This sequence belongs to the methyltransferase superfamily.

Probable methyltransferase. This is an uncharacterized protein from Schizosaccharomyces pombe (strain 972 / ATCC 24843) (Fission yeast).